A 493-amino-acid polypeptide reads, in one-letter code: Sulfoacetaldehyde dehydrogenase (acylating) (493 aa).

Basic residues predominate over residues 1-10; that stretch reads MSVQILHRRQ. The segment at 1–21 is disordered; sequence MSVQILHRRQSNNSDLPLPTA. The active-site Nucleophile is Cys-273.

This sequence belongs to the aldehyde dehydrogenase family. In terms of assembly, homodimer.

It localises to the cytoplasm. It carries out the reaction sulfoacetaldehyde + NADP(+) + CoA = sulfoacetyl-CoA + NADPH + H(+). Functionally, involved in the degradation of sulfoacetate, a widespread natural product. Catalyzes the conversion of sulfoacetyl-CoA and NADPH to sulfoacetaldehyde, CoA and NADP(+). Specific for NADP(+) and sulfoacetaldehyde. The chain is Sulfoacetaldehyde dehydrogenase (acylating) from Cupriavidus necator (strain ATCC 17699 / DSM 428 / KCTC 22496 / NCIMB 10442 / H16 / Stanier 337) (Ralstonia eutropha).